The sequence spans 252 residues: Probable ABC transporter ATP-binding protein p29 (252 aa).

One can recognise an ABC transporter domain in the interval 8-252 (LEIKNLTFKN…NILDQVFKND (245 aa)). Residue 42-49 (GSSGQGKS) coordinates ATP.

This sequence belongs to the ABC transporter superfamily.

In terms of biological role, part of a high-affinity transport system. The chain is Probable ABC transporter ATP-binding protein p29 from Mesomycoplasma hyorhinis (Mycoplasma hyorhinis).